A 194-amino-acid polypeptide reads, in one-letter code: 7-methyl-GTP pyrophosphatase (194 aa).

D71 serves as the catalytic Proton acceptor.

Belongs to the Maf family. YceF subfamily. A divalent metal cation serves as cofactor.

The protein resides in the cytoplasm. The enzyme catalyses N(7)-methyl-GTP + H2O = N(7)-methyl-GMP + diphosphate + H(+). In terms of biological role, nucleoside triphosphate pyrophosphatase that hydrolyzes 7-methyl-GTP (m(7)GTP). May have a dual role in cell division arrest and in preventing the incorporation of modified nucleotides into cellular nucleic acids. This is 7-methyl-GTP pyrophosphatase from Aromatoleum aromaticum (strain DSM 19018 / LMG 30748 / EbN1) (Azoarcus sp. (strain EbN1)).